A 1840-amino-acid polypeptide reads, in one-letter code: Collagen alpha-1(V) chain (1840 aa).

Residues 1–36 (MDVHTRWKDRLPVGPAAVPPLLLLLLLLWAPPQSRA) form the signal peptide. Residues 72-244 (DVAYRVSKDA…DYCEHYSPDC (173 aa)) form the Laminin G-like domain. Positions 231–445 (RAAYDYCEHY…MPANQDTIYE (215 aa)) are nonhelical region. Sulfotyrosine occurs at positions 234, 236, 240, 262, 263, and 271. Disordered stretches follow at residues 242–523 (PDCD…TMLM), 528–547 (FGGG…QESQ), and 561–1576 (GPAG…EVIQ). A compositionally biased stretch (acidic residues) spans 258-268 (NPDEYYPEGDG). Composition is skewed to low complexity over residues 335 to 352 (DYDY…PYED) and 376 to 386 (TSTIITSNTSN). The segment at 446-560 (GIGGPRGEKG…ILQQARLALR (115 aa)) is interrupted collagenous region. Over residues 472-487 (PPGPEGPAGLPGPPGT) the composition is skewed to pro residues. A compositionally biased stretch (low complexity) spans 508 to 523 (LPGADGLPGPPGTMLM). The span at 561-572 (GPAGPMGLTGRP) shows a compositional bias: low complexity. Residues 561 to 1572 (GPAGPMGLTG…GLPGPPGPPG (1012 aa)) form a triple-helical region region. A 4-hydroxyproline mark is found at Pro-572, Pro-578, and Pro-623. 5-hydroxylysine is present on Lys-629. 4-hydroxyproline is present on Pro-641. Lys-644 bears the 5-hydroxylysine mark. Residues Pro-650, Pro-656, Pro-659, Pro-677, and Pro-680 each carry the 4-hydroxyproline modification. Positions 673 to 688 (PRGLPGEPGPRGLLGP) are enriched in low complexity. 3-hydroxyproline occurs at positions 682 and 688. The span at 689 to 698 (KGPPGPPGPP) shows a compositional bias: pro residues. 3 positions are modified to 4-hydroxyproline: Pro-692, Pro-698, and Pro-707. At Lys-710 the chain carries 5-hydroxylysine. Pro-719, Pro-722, Pro-728, and Pro-734 each carry 4-hydroxyproline. Residues 724-743 (QQGNPGAQGLPGPQGAIGPP) show a composition bias toward low complexity. Lys-746 carries the post-translational modification 5-hydroxylysine. Low complexity predominate over residues 749–758 (LGKPGLPGMP). 5 positions are modified to 4-hydroxyproline: Pro-752, Pro-758, Pro-764, Pro-767, and Pro-773. Lys-776 is subject to 5-hydroxylysine. A 4-hydroxyproline mark is found at Pro-782 and Pro-791. 5-hydroxylysine is present on residues Lys-797, Lys-806, Lys-809, and Lys-812. 4-hydroxyproline is present on Pro-818. Lys-821 bears the 5-hydroxylysine mark. Residue Pro-836 is modified to 4-hydroxyproline. Positions 839–848 (RGEDGPEGPK) are enriched in basic and acidic residues. Residues Lys-848 and Lys-866 each carry the 5-hydroxylysine modification. Residues Pro-872, Pro-875, and Pro-878 each carry the 4-hydroxyproline modification. Lys-884 bears the 5-hydroxylysine mark. Residues Pro-890 and Pro-893 each carry the 4-hydroxyproline modification. Lys-899 is modified (5-hydroxylysine). Pro-905 and Pro-908 each carry 4-hydroxyproline. Over residues 910–919 (PRGQRGPTGP) the composition is skewed to low complexity. 2 positions are modified to 4-hydroxyproline: Pro-932 and Pro-947. Composition is skewed to low complexity over residues 973–992 (KDGL…QGKT) and 1001–1013 (VGPQ…TGPM). 4 positions are modified to 4-hydroxyproline: Pro-1019, Pro-1022, Pro-1025, and Pro-1031. A compositionally biased stretch (low complexity) spans 1090–1106 (SPGERGPAGAAGPIGIP). The span at 1108-1117 (RPGPQGPPGP) shows a compositional bias: pro residues. 4-hydroxyproline is present on residues Pro-1223 and Pro-1226. Positions 1261 to 1270 (PSGAPGADGP) are enriched in low complexity. Residues 1296-1305 (GLPGEGGPLG) are compositionally biased toward gly residues. Pro residues-rich tracts occupy residues 1382–1400 (TGEP…PGPA) and 1456–1471 (SPGP…PPGL). 4-hydroxyproline is present on residues Pro-1469 and Pro-1472. The segment covering 1487–1496 (PGLIGLIGPP) has biased composition (low complexity). Positions 1528–1543 (PLGPPGPPGLPGPPGP) are enriched in pro residues. Residues 1544 to 1556 (KGAKGSSGPTGPK) show a composition bias toward low complexity. Residues 1573–1607 (EVIQPLPIQASRTRRNIDASQLLDDGAGESYLDYA) form a nonhelical region region. A sulfotyrosine mark is found at Tyr-1603 and Tyr-1606. The Fibrillar collagen NC1 domain occupies 1611 to 1839 (EEIFGSLNSL…GFEVGPACFL (229 aa)).

This sequence belongs to the fibrillar collagen family. As to quaternary structure, trimers of two alpha 1(V) and one alpha 2(V) chains in most tissues and trimers of one alpha 1(V), one alpha 2(V), and one alpha 3(V) chains in placenta. Interacts with CSPG4. In terms of processing, hydroxylation on proline residues within the sequence motif, GXPG, is most likely to be 4-hydroxy as this fits the requirement for 4-hydroxylation in vertebrates. Post-translationally, sulfated on 40% of tyrosines. In terms of tissue distribution, ubiquitously expressed.

The protein resides in the secreted. The protein localises to the extracellular space. It is found in the extracellular matrix. In terms of biological role, type V collagen is a member of group I collagen (fibrillar forming collagen). It is a minor connective tissue component of nearly ubiquitous distribution. Type V collagen binds to DNA, heparan sulfate, thrombospondin, heparin, and insulin. In Cricetulus longicaudatus (Long-tailed dwarf hamster), this protein is Collagen alpha-1(V) chain (COL5A1).